We begin with the raw amino-acid sequence, 158 residues long: NAD(P)H-quinone oxidoreductase subunit J, chloroplastic (158 aa).

It belongs to the complex I 30 kDa subunit family. In terms of assembly, NDH is composed of at least 16 different subunits, 5 of which are encoded in the nucleus.

It localises to the plastid. The protein resides in the chloroplast thylakoid membrane. It carries out the reaction a plastoquinone + NADH + (n+1) H(+)(in) = a plastoquinol + NAD(+) + n H(+)(out). The enzyme catalyses a plastoquinone + NADPH + (n+1) H(+)(in) = a plastoquinol + NADP(+) + n H(+)(out). Functionally, NDH shuttles electrons from NAD(P)H:plastoquinone, via FMN and iron-sulfur (Fe-S) centers, to quinones in the photosynthetic chain and possibly in a chloroplast respiratory chain. The immediate electron acceptor for the enzyme in this species is believed to be plastoquinone. Couples the redox reaction to proton translocation, and thus conserves the redox energy in a proton gradient. The protein is NAD(P)H-quinone oxidoreductase subunit J, chloroplastic of Coffea arabica (Arabian coffee).